The chain runs to 358 residues: MAPMGIRLSPLGVAVFCLLGLGVLYHLYSGFLAGRFSLFGLGGEPAGGAAGPPAAADGGTVDLREMLAVSVLAAVRGGDEVRRVRESNVLHEKSKGKTREGADDKMTSGDVLSNRKMFYLLKTAFPSVQINTEEHVDAADQEVILWDHKIPEDILKEVTAPKEVPAESVTVWIDPLDATQEYTEDLRKYVTTMVCVAVNGKPVLGVIHKPFSEYTAWAMVDGGSNVKARSSYNEKTPRIVVSRSHSGMVKQVALQTFGNQTTIIPAGGAGYKVLALLDVPDKSQEKADLYIHVTYIKKWDICAGNAILKALGGHMTTLSGEEISYTGSDGIEGGLLASIRMNHQALVRKLPDLEKMGH.

At methionine 1 the chain carries N-acetylmethionine. Residues 1–12 (MAPMGIRLSPLG) lie on the Cytoplasmic side of the membrane. The chain crosses the membrane as a helical span at residues 13-33 (VAVFCLLGLGVLYHLYSGFLA). The Lumenal portion of the chain corresponds to 34 to 358 (GRFSLFGLGG…KLPDLEKMGH (325 aa)). The disordered stretch occupies residues 85 to 106 (RESNVLHEKSKGKTREGADDKM). Aspartate 110 functions as the Proton acceptor in the catalytic mechanism. Positions 133, 174, 176, and 177 each coordinate Mg(2+). Residue threonine 179 is the Proton acceptor of the active site. Residues serine 242 and histidine 245 each coordinate AMP. N-linked (GlcNAc...) asparagine glycosylation occurs at asparagine 259. Residues glycine 268 and lysine 272 each contribute to the AMP site. A Mg(2+)-binding site is contributed by aspartate 300.

The protein belongs to the inositol monophosphatase superfamily. Mg(2+) is required as a cofactor. Post-translationally, contains N-linked glycan resistant to endoglycosydase H.

It localises to the golgi apparatus. Its subcellular location is the trans-Golgi network membrane. The catalysed reaction is adenosine 3',5'-bisphosphate + H2O = AMP + phosphate. It participates in sulfur metabolism. Strongly inhibited by lithium. Its function is as follows. Exhibits 3'-nucleotidase activity toward adenosine 3',5'-bisphosphate (PAP), namely hydrolyzes adenosine 3',5'-bisphosphate into adenosine 5'-monophosphate (AMP) and a phosphate. May play a role in the formation of skeletal elements derived through endochondral ossification, possibly by clearing adenosine 3',5'-bisphosphate produced by Golgi sulfotransferases during glycosaminoglycan sulfation. Has no activity toward 3'-phosphoadenosine 5'-phosphosulfate (PAPS) or inositol phosphate (IP) substrates including I(1)P, I(1,4)P2, I(1,3,4)P3, I(1,4,5)P3 and I(1,3,4,5)P4. The protein is Golgi-resident adenosine 3',5'-bisphosphate 3'-phosphatase (BPNT2) of Callithrix jacchus (White-tufted-ear marmoset).